We begin with the raw amino-acid sequence, 513 residues long: Light-independent protochlorophyllide reductase subunit B (513 aa).

D36 is a binding site for [4Fe-4S] cluster. D299 acts as the Proton donor in catalysis. G434 to M435 is a substrate binding site.

Belongs to the ChlB/BchB/BchZ family. Protochlorophyllide reductase is composed of three subunits; ChlL, ChlN and ChlB. Forms a heterotetramer of two ChlB and two ChlN subunits. It depends on [4Fe-4S] cluster as a cofactor.

Its subcellular location is the plastid. The protein resides in the chloroplast. It catalyses the reaction chlorophyllide a + oxidized 2[4Fe-4S]-[ferredoxin] + 2 ADP + 2 phosphate = protochlorophyllide a + reduced 2[4Fe-4S]-[ferredoxin] + 2 ATP + 2 H2O. It participates in porphyrin-containing compound metabolism; chlorophyll biosynthesis (light-independent). Component of the dark-operative protochlorophyllide reductase (DPOR) that uses Mg-ATP and reduced ferredoxin to reduce ring D of protochlorophyllide (Pchlide) to form chlorophyllide a (Chlide). This reaction is light-independent. The NB-protein (ChlN-ChlB) is the catalytic component of the complex. The chain is Light-independent protochlorophyllide reductase subunit B from Zygnema circumcarinatum (Green alga).